The following is a 199-amino-acid chain: Protein C (199 aa).

Polar residues-rich tracts occupy residues 19 to 34 and 43 to 57; these read QLIS…SYSA and KTTQ…SAPP. The segment at 19–67 is disordered; that stretch reads QLISPRPSTSLNSYSAPTPKKTYRKTTQSTQEPSNSAPPSVNQKSNQQK. Positions 58-67 are enriched in low complexity; the sequence is SVNQKSNQQK.

Belongs to the respirovirus protein C family.

The polypeptide is Protein C (P/V/C) (Human parainfluenza 3 virus (strain Wash/47885/57) (HPIV-3)).